Consider the following 1213-residue polypeptide: Chitin synthase 3 (1213 aa).

A disordered region spans residues 1–97; that stretch reads MSNFRDSSSP…TPPHQEEEED (97 aa). The Cytoplasmic portion of the chain corresponds to 1–168; it reads MSNFRDSSSP…KPKHDIYFWK (168 aa). Residues 32–44 show a composition bias toward basic and acidic residues; sequence IRPERSRMDESHP. Positions 75 to 87 are enriched in polar residues; that stretch reads ELSTSRSHLSNYA. Residues 169–189 traverse the membrane as a helical segment; sequence VYCYAITFWAPAPLLKLFGLP. Over 190–200 the chain is Extracellular; the sequence is TKDRQFAWREK. A helical membrane pass occupies residues 201 to 221; it reads IGLISCILYVGAFVAYLTFGF. Residues 222–450 are Cytoplasmic-facing; sequence TKTVCSSQVV…TDTIGCIASK (229 aa). The chain crosses the membrane as a helical span at residues 451–471; that stretch reads VVLYMSLVFILSVVVVKFIMA. Topologically, residues 472 to 1016 are extracellular; sequence CWFKWVTSRK…INSTVHNLFE (545 aa). Asn-588 and Asn-1008 each carry an N-linked (GlcNAc...) asparagine glycan. Residues 1017–1037 traverse the membrane as a helical segment; sequence LVLVKDLCGTFCFSMQFVIFI. Residues 1038–1039 lie on the Cytoplasmic side of the membrane; the sequence is EL. The chain crosses the membrane as a helical span at residues 1040–1060; sequence IGTLVLPAAITFTIYVIIVAI. Topologically, residues 1061–1065 are extracellular; sequence VSKPT. Residues 1066-1086 form a helical membrane-spanning segment; that stretch reads PVMSLVLLAVIFGLPGCLIVI. Over 1087–1213 the chain is Cytoplasmic; it reads TVSSLSYLVY…LSQGSSSGSS (127 aa). A disordered region spans residues 1161–1213; sequence ERRSTENRKQQQQQQLTNNSSNNLAVPGAAWDPSNTGGNLIDDLSQGSSSGSS.

The protein belongs to the chitin synthase family. Class IV subfamily.

It is found in the cell membrane. The enzyme catalyses [(1-&gt;4)-N-acetyl-beta-D-glucosaminyl](n) + UDP-N-acetyl-alpha-D-glucosamine = [(1-&gt;4)-N-acetyl-beta-D-glucosaminyl](n+1) + UDP + H(+). Its function is as follows. Polymerizes chitin, a structural polymer of the cell wall and septum, by transferring the sugar moiety of UDP-GlcNAc to the non-reducing end of the growing chitin polymer. This is Chitin synthase 3 (CHS3) from Candida albicans (Yeast).